A 742-amino-acid polypeptide reads, in one-letter code: NAD(P)H-quinone oxidoreductase subunit 5, chloroplastic (742 aa).

Transmembrane regions (helical) follow at residues 9–29 (WIIPLLPLPVTMSIGFGLLLI), 40–60 (WAFPSVLLLSIGLIFSANLAF), 89–109 (IDPLTSVMLILITTVGIMVLI), 125–145 (FAYMSFFNASMLGLVTSSNLI), 147–167 (IYIFWELVGMCSYLLIGFWFT), 185–205 (GDFGLLLGILGFYWITGSFEF), 228–248 (AFLLFLGAIAKSAQFPLHVWL), 256–276 (TPISALIHAATMVAAGIFLVA), 288–308 (IMNIISLIGVITLLLGATLAL), 325–345 (LGYIMLALGLGSYRAALFHLI), 352–372 (ALLFLGSGSIIHSMEPLVGYS), 394–414 (TTFLLGTLSLCGIPPLACFWS), 423–443 (WLYSPSFAVIAYFTAGLTAFY), 544–564 (YPLLILVVFTLFVGFIGIPLV), 599–619 (FFINASFSVSIATGGIFLAFI), and 720–740 (ISFYLFFYLFFILIFVYFLFL).

This sequence belongs to the complex I subunit 5 family. As to quaternary structure, NDH is composed of at least 16 different subunits, 5 of which are encoded in the nucleus.

It is found in the plastid. The protein resides in the chloroplast thylakoid membrane. It catalyses the reaction a plastoquinone + NADH + (n+1) H(+)(in) = a plastoquinol + NAD(+) + n H(+)(out). The enzyme catalyses a plastoquinone + NADPH + (n+1) H(+)(in) = a plastoquinol + NADP(+) + n H(+)(out). In terms of biological role, NDH shuttles electrons from NAD(P)H:plastoquinone, via FMN and iron-sulfur (Fe-S) centers, to quinones in the photosynthetic chain and possibly in a chloroplast respiratory chain. The immediate electron acceptor for the enzyme in this species is believed to be plastoquinone. Couples the redox reaction to proton translocation, and thus conserves the redox energy in a proton gradient. In Lemna minor (Common duckweed), this protein is NAD(P)H-quinone oxidoreductase subunit 5, chloroplastic (ndhF).